Consider the following 485-residue polypeptide: 6-phosphogluconate dehydrogenase, decarboxylating (485 aa).

Residues 12-17 (GLAVMG), 35-37 (NRT), 77-79 (VKA), and Asn105 contribute to the NADP(+) site. Substrate-binding positions include Asn105 and 131–133 (SGG). Lys186 acts as the Proton acceptor in catalysis. Position 189 to 190 (189 to 190 (HN)) interacts with substrate. Catalysis depends on Glu193, which acts as the Proton donor. Substrate is bound by residues Tyr194, Lys263, Arg290, Arg449, and His455.

It belongs to the 6-phosphogluconate dehydrogenase family. Homodimer.

It catalyses the reaction 6-phospho-D-gluconate + NADP(+) = D-ribulose 5-phosphate + CO2 + NADPH. It functions in the pathway carbohydrate degradation; pentose phosphate pathway; D-ribulose 5-phosphate from D-glucose 6-phosphate (oxidative stage): step 3/3. Catalyzes the oxidative decarboxylation of 6-phosphogluconate to ribulose 5-phosphate and CO(2), with concomitant reduction of NADP to NADPH. This Cunninghamella elegans protein is 6-phosphogluconate dehydrogenase, decarboxylating (6-PGD).